A 271-amino-acid polypeptide reads, in one-letter code: Aquaporin-1 (271 aa).

Residues 1–11 (MASEFKKKLFW) lie on the Cytoplasmic side of the membrane. A helical membrane pass occupies residues 12–29 (RAVVAEFLAMILFIFISI). Topologically, residues 30 to 48 (GSALGFHYPIKSNQTTGAV) are extracellular. Asn-42 carries an N-linked (GlcNAc...) asparagine glycan. A helical membrane pass occupies residues 49-67 (QDNVKVSLAFGLSIATLAQ). The Cytoplasmic portion of the chain corresponds to 68–70 (SVG). An intramembrane segment occupies 71–84 (HISGAHLNPAVTLG). Positions 78-80 (NPA) match the NPA 1 motif. Residues 85–92 (LLLSCQIS) are Cytoplasmic-facing. Residues 93–111 (VLRAIMYIIAQCVGAIVAT) traverse the membrane as a helical segment. Topologically, residues 112 to 135 (AILSGITSSLPDNSLGLNALAPGV) are extracellular. A helical transmembrane segment spans residues 136 to 155 (NSGQGLGIEIIGTLQLVLCV). At 156-165 (LATTDRRRRD) the chain is on the cytoplasmic side. The chain crosses the membrane as a helical span at residues 166–183 (LGGSGPLAIGFSVALGHL). The Extracellular portion of the chain corresponds to 184 to 188 (LAIDY). An intramembrane segment occupies 189-201 (TGCGINPARSFGS). An NPA 2 motif is present at residues 194–196 (NPA). Topologically, residues 202–208 (SVITHNF) are extracellular. The helical transmembrane segment at 209 to 226 (QDHWIFWVGPFIGAALAV) threads the bilayer. The Cytoplasmic portion of the chain corresponds to 227–271 (LIYDFILAPRSSDLTDRVKVWTSGQVEEYDLDADDINSRVEMKPK). At Ser-249 the chain carries Phosphoserine. Tyr-255 is subject to Phosphotyrosine. Phosphoserine is present on Ser-264.

It belongs to the MIP/aquaporin (TC 1.A.8) family. As to quaternary structure, homotetramer; each monomer provides an independent water pore. Component of the ankyrin-1 complex in the erythrocyte, composed of ANK1, RHCE, RHAG, SLC4A1, EPB42, GYPA, GYPB and AQP1. Interacts with EPHB2; involved in endolymph production in the inner ear. Identified in a complex with STOM. Interacts (via the N-terminal) with ANK1 (via ANK 1-5 repeats). Interacts (via the C-terminal) with EPB42.

The protein resides in the cell membrane. The enzyme catalyses H2O(in) = H2O(out). It carries out the reaction nitric oxide(out) = nitric oxide(in). The catalysed reaction is CO2(out) = CO2(in). It catalyses the reaction glycerol(in) = glycerol(out). The enzyme catalyses H2O2(out) = H2O2(in). It carries out the reaction K(+)(in) = K(+)(out). The catalysed reaction is Na(+)(in) = Na(+)(out). In terms of biological role, forms a water channel that facilitates the transport of water across cell membranes, playing a crucial role in water homeostasis in various tissues. Could also be permeable to small solutes including hydrogen peroxide, glycerol and gases such as amonnia (NH3), nitric oxide (NO) and carbon dioxide (CO2). Recruited to the ankyrin-1 complex, a multiprotein complex of the erythrocyte membrane, it could be part of a CO2 metabolon, linking facilitated diffusion of CO2 across the membrane, anion exchange of Cl(-)/HCO3(-) and interconversion of dissolved CO2 and carbonic acid in the cytosol. In vitro, it shows non-selective gated cation channel activity and may be permeable to cations like K(+) and Na(+) in vivo. In Bos taurus (Bovine), this protein is Aquaporin-1.